The chain runs to 963 residues: Putative RNA Helicase B962L (963 aa).

One can recognise a Helicase ATP-binding domain in the interval 43 to 229 (IPTSLADRVL…FGIGKENIIL (187 aa)). Residue 56 to 63 (SRTGSGKS) coordinates ATP. Positions 167–170 (DEAH) match the DEAH box motif. The 207-residue stretch at 253–459 (ACETALTIHK…TIKKNKEGVF (207 aa)) folds into the Helicase C-terminal domain. Residues 521-541 (GYFWQAAISDIAIILAVVSVV) traverse the membrane as a helical segment.

Belongs to the DEAD box helicase family. DEAH subfamily.

It is found in the host membrane. The protein localises to the virion. It carries out the reaction ATP + H2O = ADP + phosphate + H(+). The protein is Putative RNA Helicase B962L of African swine fever virus (isolate Tick/Malawi/Lil 20-1/1983) (ASFV).